Reading from the N-terminus, the 304-residue chain is Urease accessory protein UreD 2 (304 aa).

Belongs to the UreD family. As to quaternary structure, ureD, UreF and UreG form a complex that acts as a GTP-hydrolysis-dependent molecular chaperone, activating the urease apoprotein by helping to assemble the nickel containing metallocenter of UreC. The UreE protein probably delivers the nickel.

The protein resides in the cytoplasm. Its function is as follows. Required for maturation of urease via the functional incorporation of the urease nickel metallocenter. In terms of biological role, disrupting the ure2 operon has no effect on urease activity or pathogen survival in BALB/c mice when administered orally. The chain is Urease accessory protein UreD 2 from Brucella abortus (strain 2308).